The chain runs to 294 residues: Large ribosomal subunit protein uL2c (294 aa).

The tract at residues 224–249 (VMNPVDHPHGGGGEGKSPIGRSRPVT) is disordered.

The protein belongs to the universal ribosomal protein uL2 family. In terms of assembly, part of the 50S ribosomal subunit.

The protein resides in the plastid. It is found in the chloroplast. The sequence is that of Large ribosomal subunit protein uL2c (rpl2) from Porphyra purpurea (Red seaweed).